The primary structure comprises 286 residues: Pantothenate synthetase (286 aa).

30–37 is an ATP binding site; sequence MGNLHAGH. Catalysis depends on histidine 37, which acts as the Proton donor. Glutamine 61 contacts (R)-pantoate. Glutamine 61 is a beta-alanine binding site. Position 149–152 (149–152) interacts with ATP; the sequence is GQKD. Glutamine 155 is a (R)-pantoate binding site. ATP-binding positions include valine 178 and 186 to 189; that span reads LSSR.

It belongs to the pantothenate synthetase family. Homodimer.

It is found in the cytoplasm. The enzyme catalyses (R)-pantoate + beta-alanine + ATP = (R)-pantothenate + AMP + diphosphate + H(+). It participates in cofactor biosynthesis; (R)-pantothenate biosynthesis; (R)-pantothenate from (R)-pantoate and beta-alanine: step 1/1. Its function is as follows. Catalyzes the condensation of pantoate with beta-alanine in an ATP-dependent reaction via a pantoyl-adenylate intermediate. This is Pantothenate synthetase from Stutzerimonas stutzeri (strain A1501) (Pseudomonas stutzeri).